The following is a 530-amino-acid chain: Metal transporter Nramp2 (530 aa).

The disordered stretch occupies residues Met-1–Ala-35. A run of 12 helical transmembrane segments spans residues Leu-68 to Leu-88, Ala-96 to Ile-116, Leu-153 to Leu-173, Phe-177 to Leu-197, Leu-205 to Gly-225, Ala-251 to Val-271, Val-297 to Phe-317, Phe-339 to Gln-359, Ile-395 to Leu-415, Trp-418 to Val-438, Ile-456 to Phe-476, and Leu-484 to Ile-504.

It belongs to the NRAMP (TC 2.A.55) family.

The protein localises to the membrane. Seems to be involved in iron uptake. The polypeptide is Metal transporter Nramp2 (NRAMP2) (Arabidopsis thaliana (Mouse-ear cress)).